Here is a 145-residue protein sequence, read N- to C-terminus: 3-hydroxyacyl-[acyl-carrier-protein] dehydratase FabZ (145 aa).

H48 is an active-site residue.

It belongs to the thioester dehydratase family. FabZ subfamily.

The protein localises to the cytoplasm. The catalysed reaction is a (3R)-hydroxyacyl-[ACP] = a (2E)-enoyl-[ACP] + H2O. Functionally, involved in unsaturated fatty acids biosynthesis. Catalyzes the dehydration of short chain beta-hydroxyacyl-ACPs and long chain saturated and unsaturated beta-hydroxyacyl-ACPs. The protein is 3-hydroxyacyl-[acyl-carrier-protein] dehydratase FabZ of Marinomonas sp. (strain MWYL1).